We begin with the raw amino-acid sequence, 1096 residues long: Lysine-specific demethylase PHF2 (1096 aa).

Residues 5–56 (PVYCVCRLPYDVTRFMIECDACKDWFHGSCVGVEEEEAPDIDIYHCPNCEKT) form a PHD-type zinc finger. Residues threonine 193 and threonine 246 each coordinate 2-oxoglutarate. Residues 197 to 353 (FSDTRMSSFV…MQMRAYEVER (157 aa)) enclose the JmjC domain. Fe cation is bound by residues histidine 249 and aspartate 251. Residues tyrosine 259 and lysine 266 each coordinate 2-oxoglutarate. Residue tyrosine 321 participates in Fe cation binding. Threonine 323 contributes to the 2-oxoglutarate binding site. Positions 448-630 (TVRPEVNAAA…KSPLAGNKDK (183 aa)) are disordered. Serine 474 is subject to Phosphoserine. Threonine 479 bears the Phosphothreonine mark. A compositionally biased stretch (pro residues) spans 503–515 (SKIPKPPKSPKPP). Residue serine 536 is modified to Phosphoserine. 2 stretches are compositionally biased toward basic and acidic residues: residues 545–560 (LEAHTKEALTKMEPPK) and 575–630 (DTVH…NKDK). Residues serine 651, serine 677, and serine 701 each carry the phosphoserine modification. A Glycyl lysine isopeptide (Lys-Gly) (interchain with G-Cter in SUMO2) cross-link involves residue lysine 707. Lysine 716 is subject to N6-acetyllysine. Disordered stretches follow at residues 719 to 755 (LDSAVYKSDDSSDEGSLHIDTDTKPGRNAKVKKESGS), 811 to 841 (WGTGQAKGGSLAAHGARKIGGGNKGTGKRLL), and 871 to 1080 (YPSL…TAKQ). A Phosphotyrosine modification is found at tyrosine 724. Residues 725–753 (KSDDSSDEGSLHIDTDTKPGRNAKVKKES) are compositionally biased toward basic and acidic residues. Phosphoserine occurs at positions 726, 729, 730, and 734. 3 positions are modified to phosphoserine: serine 873, serine 876, and serine 893. Residues 910–919 (RQDRPVREGT) show a composition bias toward basic and acidic residues. Residues 943–953 (NRKKKNTKRKP) show a composition bias toward basic residues. A compositionally biased stretch (low complexity) spans 954–1010 (APNTASPSISTSASASTGTTSASTTPASTTPASTTPASTTPASTSTASSQASQEGSS). Polar residues-rich tracts occupy residues 1031–1040 (GTFSGSQAGR) and 1054–1065 (RRPSASSPNNTA). Serine 1057 is subject to Phosphoserine; by PKA.

The protein belongs to the JHDM1 histone demethylase family. JHDM1D subfamily. As to quaternary structure, component of the PHF2-ARID5B complex, at least composed of PHF2 and ARID5B. Interacts with HNF4A and NR1H4. Interacts with RELA. In terms of processing, phosphorylated by PKA on specific serine residues, leading to the formation of an active lysine demethylase complex.

It is found in the nucleus. It localises to the nucleolus. Its subcellular location is the chromosome. The protein resides in the centromere. The protein localises to the kinetochore. It catalyses the reaction N(6),N(6)-dimethyl-L-lysyl(9)-[histone H3] + 2-oxoglutarate + O2 = N(6)-methyl-L-lysyl(9)-[histone H3] + formaldehyde + succinate + CO2. Enzymatically inactive by itself, and become active following phosphorylation by PKA. Functionally, lysine demethylase that demethylates both histones and non-histone proteins. Enzymatically inactive by itself, and becomes active following phosphorylation by PKA: forms a complex with ARID5B and mediates demethylation of methylated ARID5B. Demethylation of ARID5B leads to target the PHF2-ARID5B complex to target promoters, where PHF2 mediates demethylation of dimethylated 'Lys-9' of histone H3 (H3K9me2), followed by transcription activation of target genes. The PHF2-ARID5B complex acts as a coactivator of HNF4A in liver. PHF2 is recruited to trimethylated 'Lys-4' of histone H3 (H3K4me3) at rDNA promoters and promotes expression of rDNA. Involved in the activation of toll-like receptor 4 (TLR4)-target inflammatory genes in macrophages by catalyzing the demethylation of trimethylated histone H4 lysine 20 (H4K20me3) at the gene promoters. This Mus musculus (Mouse) protein is Lysine-specific demethylase PHF2 (Phf2).